Consider the following 317-residue polypeptide: NAD kinase (317 aa).

Catalysis depends on D82, which acts as the Proton acceptor. NAD(+) contacts are provided by residues 82 to 83, R87, 157 to 158, D187, and 198 to 203; these read DG, NE, and TAYAFS.

It belongs to the NAD kinase family. A divalent metal cation is required as a cofactor.

The protein resides in the cytoplasm. The catalysed reaction is NAD(+) + ATP = ADP + NADP(+) + H(+). Functionally, involved in the regulation of the intracellular balance of NAD and NADP, and is a key enzyme in the biosynthesis of NADP. Catalyzes specifically the phosphorylation on 2'-hydroxyl of the adenosine moiety of NAD to yield NADP. The chain is NAD kinase from Corynebacterium diphtheriae (strain ATCC 700971 / NCTC 13129 / Biotype gravis).